The sequence spans 201 residues: Transmembrane 4 L6 family member 18 (201 aa).

The Cytoplasmic portion of the chain corresponds to 1–9; the sequence is MGSRKCGSC. The helical transmembrane segment at 10–30 threads the bilayer; sequence LSSLLIPLALWSIIVNILLYF. The Extracellular portion of the chain corresponds to 31–49; sequence PNGQASYASSNKLTNYVWY. A helical membrane pass occupies residues 50–70; the sequence is FEGICFSGIMMLVVAAVLLVL. At 71–93 the chain is on the cytoplasmic side; that stretch reads ENDNNYKCCQSENCSKKYMTVLS. The chain crosses the membrane as a helical span at residues 94–114; the sequence is MIFSALGIAFSGYCLVISALG. At 115-157 the chain is on the extracellular side; sequence LLQGPYCRTLDGWEYAFEGTAGRFLTDSREWIQCLEPAHVVEW. The chain crosses the membrane as a helical span at residues 158 to 178; the sequence is NIILFSILIALSGLQVIVCLI. At 179–201 the chain is on the cytoplasmic side; that stretch reads RVVIQLSKSLCGTYSVIIQPGII.

It belongs to the L6 tetraspanin family.

It localises to the membrane. This chain is Transmembrane 4 L6 family member 18 (TM4SF18), found in Bos taurus (Bovine).